The primary structure comprises 999 residues: MAATVRRQRPRRLLCWALVAVLLADLLALSDTLAVMSVDLGSESMKVAIVKPGVPMEIVLNKESRRKTPVTVTLKENERFLGDSAAGMAIKNPKATLRYFQHLLGKQADNPHVALYRSRFPEHELNVDPQRQTVRFQISPQLQFSPEEVLGMVLNYSRSLAEDFAEQPIKDAVITVPAFFNQAERRAVLQAARMAGLKVLQLINDNTATALSYGVFRRKDINSTAQNIMFYDMGSGSTVCTIVTYQTVKTKEAGTQPQLQIRGVGFDRTLGGLEMELRLREHLAKLFNEQRKGQKAKDVRENPRAMAKLLREANRLKTVLSANADHMAQIEGLMDDVDFKAKVTRVEFEELCADLFDRVPGPVQQALQSAEMSLDQIEQVILVGGPTRVPKVQEVLLKPVGKEELGKNINADEAAAMGAVYQAAALSKAFKVKPFVVRDAVIYPILVEFTREVEEEPGLRSLKHNKRVLFSRMGPYPQRKVITFNRYSHDFNFHINYGDLGFLGPEDLRVFGSQNLTTVKLKGVGESFKKYPDYESKGIKAHFNLDESGVLSLDRVESVFETLVEDSPEEESTLTKLGNTISSLFGGGTSSDAKENGTDAVQEEEESPAEGSKDEPAEQGELKEEAEAPMEDTSQPPPSEPKGDAAREGETPDEKESGDKSEAQKPNEKGQAGPEGVPPAPEEEKKQKPARKQKMVEEIGVELAVLDLPDLPEDELAHSVQKLEDLTLRDLEKQEREKAANSLEAFIFETQDKLYQPEYQEVSTEEQREEISGKLSATSTWLEDEGFGATTVMLKDKLAELRKLCQGLFFRVEERRKWPERLSALDNLLNHSSIFLKGARLIPEMDQIFTDVEMTTLEKVINDTWTWKNATLAEQAKLPATEKPVLLSKDIEAKMMALDREVQYLLNKAKFTKPRPRPKDKNGTRTEPPLNASAGDQEEKVIPPTGQTEEAKAILEPDKEGLGTEAADSEPLELGGPGAESEQAEQTAGQKRPLKNDEL.

The signal sequence occupies residues 1–32; it reads MAATVRRQRPRRLLCWALVAVLLADLLALSDT. 3 N-linked (GlcNAc...) asparagine glycosylation sites follow: Asn155, Asn222, and Asn515. The tract at residues 564–694 is disordered; that stretch reads VEDSPEEEST…KKQKPARKQK (131 aa). Ser567 carries the phosphoserine modification. Positions 574–583 are enriched in polar residues; the sequence is LTKLGNTISS. Asn596 carries an N-linked (GlcNAc...) asparagine glycan. 2 stretches are compositionally biased toward basic and acidic residues: residues 611–626 and 641–668; these read GSKDEPAEQGELKEEA and PKGDAAREGETPDEKESGDKSEAQKPNE. Residues Asn830, Asn862, and Asn869 are each glycosylated (N-linked (GlcNAc...) asparagine). N6-acetyllysine is present on Lys883. The tract at residues 909–999 is disordered; sequence AKFTKPRPRP…QKRPLKNDEL (91 aa). Residues Asn922 and Asn931 are each glycosylated (N-linked (GlcNAc...) asparagine). The span at 949–962 shows a compositional bias: basic and acidic residues; sequence EEAKAILEPDKEGL. Residues 996–999 carry the Prevents secretion from ER motif; sequence NDEL.

The protein belongs to the heat shock protein 70 family. As to quaternary structure, part of a large chaperone multiprotein complex comprising DNAJB11, HSP90B1, HSPA5, HYOU, PDIA2, PDIA4, PDIA6, PPIB, SDF2L1, UGGT1 and very small amounts of ERP29, but not, or at very low levels, CALR nor CANX. As to expression, selectively expressed by cultured astrocytes but not endothelial cells, microglia or neurons.

Its subcellular location is the endoplasmic reticulum lumen. Its function is as follows. Has a pivotal role in cytoprotective cellular mechanisms triggered by oxygen deprivation. Promotes HSPA5/BiP-mediated ATP nucleotide exchange and thereby activates the unfolded protein response (UPR) pathway in the presence of endoplasmic reticulum stress. May play a role as a molecular chaperone and participate in protein folding. The polypeptide is Hypoxia up-regulated protein 1 (Hyou1) (Rattus norvegicus (Rat)).